Consider the following 360-residue polypeptide: MKISLGLIYGGKSAEHNVSLQTALAVTKALNTEKFDIHPIYITEEGEWLRGEKLTEPVSNVRMLQFEQNAKTFLPTSLNESMFPQPTSADEKIDVVFPLLHGPNGEDGTMQGLLELLNIPYVGNGVLASAAGMDKVMMKDVFAQAGLAQAKHLSFNKKDYEKATPDSLEQVEQVLGYPCFVKPANMGSSVGISKCRSKEELQTAFDLAFQYDRRVVVEEGVVGREIEIGVLGNDEPKCSVVGEIAPKTDFYDYKAKYEDGDTDLIIPASVSEDEYKTIHDMAIKAFKSLDGSGLVRADFFLTEKGEVLINEVNTMPGFTPFSMFPLLWKHTGVEYPELIEKLVSLAIERHQEKQTIKTTF.

Residues 139 to 344 (KDVFAQAGLA…YPELIEKLVS (206 aa)) enclose the ATP-grasp domain. Residue 172-227 (EQVLGYPCFVKPANMGSSVGISKCRSKEELQTAFDLAFQYDRRVVVEEGVVGREIE) coordinates ATP. 3 residues coordinate Mg(2+): Asp-298, Glu-311, and Asn-313.

This sequence belongs to the D-alanine--D-alanine ligase family. It depends on Mg(2+) as a cofactor. Mn(2+) is required as a cofactor.

It localises to the cytoplasm. The enzyme catalyses 2 D-alanine + ATP = D-alanyl-D-alanine + ADP + phosphate + H(+). Its pathway is cell wall biogenesis; peptidoglycan biosynthesis. Its function is as follows. Cell wall formation. In Bacillus pumilus (strain SAFR-032), this protein is D-alanine--D-alanine ligase.